The primary structure comprises 398 residues: Succinate--CoA ligase [ADP-forming] subunit beta (398 aa).

The region spanning 9–254 is the ATP-grasp domain; sequence KAVLREFGVP…ESEEDAKEIE (246 aa). Residues Lys-46, 53–55, Glu-109, Ser-112, and Glu-117 contribute to the ATP site; that span reads GRG. Residues Asn-209 and Asp-223 each contribute to the Mg(2+) site. Residues Asn-274 and 331–333 each bind substrate; that span reads GIM.

Belongs to the succinate/malate CoA ligase beta subunit family. Heterotetramer of two alpha and two beta subunits. The cofactor is Mg(2+).

It carries out the reaction succinate + ATP + CoA = succinyl-CoA + ADP + phosphate. It catalyses the reaction GTP + succinate + CoA = succinyl-CoA + GDP + phosphate. The protein operates within carbohydrate metabolism; tricarboxylic acid cycle; succinate from succinyl-CoA (ligase route): step 1/1. Functionally, succinyl-CoA synthetase functions in the citric acid cycle (TCA), coupling the hydrolysis of succinyl-CoA to the synthesis of either ATP or GTP and thus represents the only step of substrate-level phosphorylation in the TCA. The beta subunit provides nucleotide specificity of the enzyme and binds the substrate succinate, while the binding sites for coenzyme A and phosphate are found in the alpha subunit. This is Succinate--CoA ligase [ADP-forming] subunit beta from Rhodopseudomonas palustris (strain HaA2).